Reading from the N-terminus, the 218-residue chain is dTTP/UTP pyrophosphatase (218 aa).

Asp-76 functions as the Proton acceptor in the catalytic mechanism.

The protein belongs to the Maf family. YhdE subfamily. A divalent metal cation serves as cofactor.

It localises to the cytoplasm. It catalyses the reaction dTTP + H2O = dTMP + diphosphate + H(+). It carries out the reaction UTP + H2O = UMP + diphosphate + H(+). In terms of biological role, nucleoside triphosphate pyrophosphatase that hydrolyzes dTTP and UTP. May have a dual role in cell division arrest and in preventing the incorporation of modified nucleotides into cellular nucleic acids. The sequence is that of dTTP/UTP pyrophosphatase from Cytophaga hutchinsonii (strain ATCC 33406 / DSM 1761 / CIP 103989 / NBRC 15051 / NCIMB 9469 / D465).